We begin with the raw amino-acid sequence, 138 residues long: F-box protein At4g12382 (138 aa).

Positions 7 to 53 (NPSFADLPSSLIEVIMSHLALKNNIRASAACKSWYEVGVSVRVVEKH) constitute an F-box domain.

The polypeptide is F-box protein At4g12382 (Arabidopsis thaliana (Mouse-ear cress)).